Here is a 268-residue protein sequence, read N- to C-terminus: Fatty acid elongase sre1 (268 aa).

Transmembrane regions (helical) follow at residues 31 to 51 (VFPF…QAIM), 62 to 82 (FSII…SGVM), 110 to 130 (IGFW…DTVI), 137 to 157 (PIIF…WQWL), 161 to 181 (WLVG…LMYY), 198 to 218 (ITKA…YWFV), and 227 to 247 (APLS…ILFG).

The protein belongs to the ELO family.

The protein localises to the membrane. The enzyme catalyses a very-long-chain acyl-CoA + malonyl-CoA + H(+) = a very-long-chain 3-oxoacyl-CoA + CO2 + CoA. In terms of biological role, could be implicated in synthesis of very long chain fatty acids. The protein is Fatty acid elongase sre1 (sre1) of Dictyostelium discoideum (Social amoeba).